Consider the following 386-residue polypeptide: MAIASCFFCVPTPNTAISESNLTWPHIASFPRLSSSSSFNGVISAKSISFNRRVPITPVLSASSGNGGSDNNGGGLSGGGGGGDGGKNDGDGHGDEDRDRNRNEAMLLLKESGIELESLPKDLAAAIEAGRIPGSVITRFLELQKSAVMRWLMQFGGFRERLLADDLFMAKLAMECGVGIFTKTAAEYERRRENFFNELEVVFADVAMAIIADFMLVYLPAPTVSLRPPLALTAGGISKFFHNCPDNAFQVALSGTSYTLLQRLGAITRNGAKLFAVGTTSSLVGTAITNAFIKARKAVDQNSEGEVETVPIVSTSVAYGVYMAVSSNLRYQIVAGVIEQRLLEPMLHQHKLALSALCFAVRTGNTFLGSLLWVDYARLIGIQKSH.

The transit peptide at 1-61 directs the protein to the chloroplast; sequence MAIASCFFCV…RRVPITPVLS (61 aa). Residues 61–99 form a disordered region; sequence SASSGNGGSDNNGGGLSGGGGGGDGGKNDGDGHGDEDRD. The segment covering 65–85 has biased composition (gly residues); the sequence is GNGGSDNNGGGLSGGGGGGDG. Residues 86–99 show a composition bias toward basic and acidic residues; sequence GKNDGDGHGDEDRD. Helical transmembrane passes span 201-221 and 273-293; these read VVFA…YLPA and KLFA…NAFI.

Belongs to the RETICULATA family.

It is found in the plastid. Its subcellular location is the chloroplast membrane. May play a role in leaf development. This Arabidopsis thaliana (Mouse-ear cress) protein is Protein RETICULATA-RELATED 4, chloroplastic.